A 751-amino-acid polypeptide reads, in one-letter code: Phosphoribosylformylglycinamidine synthase subunit PurL (751 aa).

The active site involves His54. Tyr57 and Lys106 together coordinate ATP. Residue Glu108 coordinates Mg(2+). Substrate contacts are provided by residues 109-112 (SHNH) and Arg131. Residue His110 is the Proton acceptor of the active site. Mg(2+) is bound at residue Asp132. Gln256 is a substrate binding site. Asp284 lines the Mg(2+) pocket. Substrate is bound at residue 328-330 (ESQ). ATP-binding residues include Asp516 and Gly553. Asn554 serves as a coordination point for Mg(2+). Ser556 is a binding site for substrate.

This sequence belongs to the FGAMS family. Monomer. Part of the FGAM synthase complex composed of 1 PurL, 1 PurQ and 2 PurS subunits.

The protein resides in the cytoplasm. The catalysed reaction is N(2)-formyl-N(1)-(5-phospho-beta-D-ribosyl)glycinamide + L-glutamine + ATP + H2O = 2-formamido-N(1)-(5-O-phospho-beta-D-ribosyl)acetamidine + L-glutamate + ADP + phosphate + H(+). The protein operates within purine metabolism; IMP biosynthesis via de novo pathway; 5-amino-1-(5-phospho-D-ribosyl)imidazole from N(2)-formyl-N(1)-(5-phospho-D-ribosyl)glycinamide: step 1/2. Functionally, part of the phosphoribosylformylglycinamidine synthase complex involved in the purines biosynthetic pathway. Catalyzes the ATP-dependent conversion of formylglycinamide ribonucleotide (FGAR) and glutamine to yield formylglycinamidine ribonucleotide (FGAM) and glutamate. The FGAM synthase complex is composed of three subunits. PurQ produces an ammonia molecule by converting glutamine to glutamate. PurL transfers the ammonia molecule to FGAR to form FGAM in an ATP-dependent manner. PurS interacts with PurQ and PurL and is thought to assist in the transfer of the ammonia molecule from PurQ to PurL. In Nocardioides sp. (strain ATCC BAA-499 / JS614), this protein is Phosphoribosylformylglycinamidine synthase subunit PurL.